Consider the following 129-residue polypeptide: Small ribosomal subunit protein uS11 (129 aa).

This sequence belongs to the universal ribosomal protein uS11 family. As to quaternary structure, part of the 30S ribosomal subunit. Interacts with proteins S7 and S18. Binds to IF-3.

Located on the platform of the 30S subunit, it bridges several disparate RNA helices of the 16S rRNA. Forms part of the Shine-Dalgarno cleft in the 70S ribosome. In Salmonella newport (strain SL254), this protein is Small ribosomal subunit protein uS11.